The sequence spans 781 residues: Putative UPF0313 protein YPO0674/y3502/YP_2990 (781 aa).

One can recognise a Radical SAM core domain in the interval 368 to 646 (AYDMIRFSIN…KALLRYHDPA (279 aa)). The [4Fe-4S] cluster site is built by C382, C386, and C389. Residues 681–781 (REARRALRHH…AGSRGKNRQH (101 aa)) form a disordered region. The span at 696–708 (KHTSITRQRQPSN) shows a compositional bias: polar residues. Over residues 726–750 (TSSAHSTSANQSTSANQSTSAAHST) the composition is skewed to low complexity.

Belongs to the UPF0313 family. [4Fe-4S] cluster is required as a cofactor.

The sequence is that of Putative UPF0313 protein YPO0674/y3502/YP_2990 from Yersinia pestis.